Consider the following 324-residue polypeptide: N-acetyl-gamma-glutamyl-phosphate reductase (324 aa).

The active site involves cysteine 131.

It belongs to the NAGSA dehydrogenase family. Type 1 subfamily.

Its subcellular location is the cytoplasm. It catalyses the reaction N-acetyl-L-glutamate 5-semialdehyde + phosphate + NADP(+) = N-acetyl-L-glutamyl 5-phosphate + NADPH + H(+). Its pathway is amino-acid biosynthesis; L-arginine biosynthesis; N(2)-acetyl-L-ornithine from L-glutamate: step 3/4. In terms of biological role, catalyzes the NADPH-dependent reduction of N-acetyl-5-glutamyl phosphate to yield N-acetyl-L-glutamate 5-semialdehyde. The polypeptide is N-acetyl-gamma-glutamyl-phosphate reductase (Bradyrhizobium sp. (strain BTAi1 / ATCC BAA-1182)).